The following is a 473-amino-acid chain: Photosystem II CP43 reaction center protein (473 aa).

Positions methionine 1–glutamate 14 are excised as a propeptide. Threonine 15 is subject to N-acetylthreonine. Residue threonine 15 is modified to Phosphothreonine. 5 consecutive transmembrane segments (helical) span residues leucine 69–alanine 93, leucine 134–asparagine 155, lysine 178–threonine 200, lysine 255–serine 275, and tryptophan 291–alanine 312. Glutamate 367 serves as a coordination point for [CaMn4O5] cluster. The helical transmembrane segment at arginine 447–proline 471 threads the bilayer.

It belongs to the PsbB/PsbC family. PsbC subfamily. PSII is composed of 1 copy each of membrane proteins PsbA, PsbB, PsbC, PsbD, PsbE, PsbF, PsbH, PsbI, PsbJ, PsbK, PsbL, PsbM, PsbT, PsbX, PsbY, PsbZ, Psb30/Ycf12, at least 3 peripheral proteins of the oxygen-evolving complex and a large number of cofactors. It forms dimeric complexes. Requires Binds multiple chlorophylls and provides some of the ligands for the Ca-4Mn-5O cluster of the oxygen-evolving complex. It may also provide a ligand for a Cl- that is required for oxygen evolution. PSII binds additional chlorophylls, carotenoids and specific lipids. as cofactor.

The protein localises to the plastid. It localises to the chloroplast thylakoid membrane. Functionally, one of the components of the core complex of photosystem II (PSII). It binds chlorophyll and helps catalyze the primary light-induced photochemical processes of PSII. PSII is a light-driven water:plastoquinone oxidoreductase, using light energy to abstract electrons from H(2)O, generating O(2) and a proton gradient subsequently used for ATP formation. This Lactuca sativa (Garden lettuce) protein is Photosystem II CP43 reaction center protein.